Reading from the N-terminus, the 641-residue chain is Transcription termination factor MTERF2, chloroplastic (641 aa).

Disordered stretches follow at residues L54–G80 and F606–E641. Acidic residues predominate over residues L610–E641.

The protein belongs to the mTERF family.

The protein resides in the plastid. It localises to the chloroplast. Transcription termination factor involved in processing of plastid transcripts. Essential for embryogenesis. The polypeptide is Transcription termination factor MTERF2, chloroplastic (Arabidopsis thaliana (Mouse-ear cress)).